A 445-amino-acid polypeptide reads, in one-letter code: MREILHIQGGQCGNQIGAKFWEVICGEHGVDSTGCYSGVSPQQLERINVYYNEAGGGRYVPRAVLMDLEPGTMESIRAGPFGGIFRPDNFVYGQSGAGNNWAKGHYTEGAELIDSVLDVVRKEAENCDCLQGFQVCHSLGGGTGSGMGTLLISKIREEYPDRMMLTFSVFPSPKVSDTVVEPYNATLSVHQLVENADECMVLDNEALYDICFRTLKLTNPSFGDLNHLISATMSGVTCCLRFPGQLNSDLRKLAVNLIPFPRLHFFMVGFAPLTSRGSQQYRALTVPELTQQMWDAKNMMCAADPRHGRYLTASAMFRGKMSTKEVDEQMINVQNKNSSYFVEWIPNNVKSSVCDIPPVGLSMSSTFVGNSTSIQEMFRRVSEQFTAMFRRKAFLHWYTSEGMDEMEFTEAESNMNDLVAEYQQYQDATAEEYDEEEQDGEEEHD.

Positions 11, 69, 138, 142, 143, 144, 204, and 226 each coordinate GTP. E69 lines the Mg(2+) pocket. The segment at 425 to 445 (YQDATAEEYDEEEQDGEEEHD) is disordered. Over residues 429–445 (TAEEYDEEEQDGEEEHD) the composition is skewed to acidic residues.

Belongs to the tubulin family. In terms of assembly, dimer of alpha and beta chains. A typical microtubule is a hollow water-filled tube with an outer diameter of 25 nm and an inner diameter of 15 nM. Alpha-beta heterodimers associate head-to-tail to form protofilaments running lengthwise along the microtubule wall with the beta-tubulin subunit facing the microtubule plus end conferring a structural polarity. Microtubules usually have 13 protofilaments but different protofilament numbers can be found in some organisms and specialized cells. Mg(2+) is required as a cofactor.

The protein localises to the cytoplasm. The protein resides in the cytoskeleton. Its function is as follows. Tubulin is the major constituent of microtubules, a cylinder consisting of laterally associated linear protofilaments composed of alpha- and beta-tubulin heterodimers. Microtubules grow by the addition of GTP-tubulin dimers to the microtubule end, where a stabilizing cap forms. Below the cap, tubulin dimers are in GDP-bound state, owing to GTPase activity of alpha-tubulin. This is Tubulin beta-3 chain (TUBB3) from Zea mays (Maize).